A 36-amino-acid chain; its full sequence is Pancreatic polypeptide (36 aa).

Tyr-36 bears the Tyrosine amide mark.

This sequence belongs to the NPY family.

The protein resides in the secreted. Functionally, hormone secreted by pancreatic cells that acts as a regulator of pancreatic and gastrointestinal functions probably by signaling through the G protein-coupled receptor NPY4R2. This is Pancreatic polypeptide (PPY) from Macaca mulatta (Rhesus macaque).